A 354-amino-acid polypeptide reads, in one-letter code: Peptide chain release factor 1 (354 aa).

The residue at position 231 (Gln231) is an N5-methylglutamine.

It belongs to the prokaryotic/mitochondrial release factor family. In terms of processing, methylated by PrmC. Methylation increases the termination efficiency of RF1.

It is found in the cytoplasm. Functionally, peptide chain release factor 1 directs the termination of translation in response to the peptide chain termination codons UAG and UAA. This chain is Peptide chain release factor 1, found in Acholeplasma laidlawii (strain PG-8A).